The chain runs to 256 residues: Cell division protein DivIB (256 aa).

Topologically, residues 1 to 23 (MSKDLISTDEYIKIKKKRKRIKK) are cytoplasmic. Residues 24-44 (IVVLFIFLISILVTLCLKIPY) traverse the membrane as a helical segment. Residues 45–113 (FNIESIEIKG…NKLEIYVKER (69 aa)) enclose the POTRA domain. At 45 to 256 (FNIESIEIKG…EGNPVFYIEK (212 aa)) the chain is on the extracellular side.

This sequence belongs to the FtsQ/DivIB family. DivIB subfamily.

Its subcellular location is the cell membrane. In terms of biological role, cell division protein that may be involved in stabilizing or promoting the assembly of the division complex. The sequence is that of Cell division protein DivIB from Clostridium botulinum (strain Loch Maree / Type A3).